The primary structure comprises 422 residues: Regulator of sigma-W protease RasP (422 aa).

4 helical membrane-spanning segments follow: residues 6-26 (VIAF…GHLL), 175-195 (IAAG…MLGL), 346-366 (IVNL…VNLL), and 394-414 (EAFV…VVTW). Residue H20 coordinates Zn(2+). The active site involves E21. H24 is a binding site for Zn(2+). Residues 186–271 (AYVILVMLGL…TLHISVTPEA (86 aa)) form the PDZ domain.

This sequence belongs to the peptidase M50B family. Zn(2+) serves as cofactor.

The protein localises to the cell membrane. Its function is as follows. Is responsible for site-2 cleavage of the RsiW anti-sigma factor. This results, after a third proteolytic step catalyzed by the ClpXP protease, in the release of SigW and the transcription activation of the genes under the control of the sigma-W factor. Can also cleave liberated signal peptides of PenP and Mpr, probably within in the cell membrane. This Bacillus subtilis (strain 168) protein is Regulator of sigma-W protease RasP.